We begin with the raw amino-acid sequence, 138 residues long: Putative pre-16S rRNA nuclease (138 aa).

It belongs to the YqgF nuclease family.

It is found in the cytoplasm. Functionally, could be a nuclease involved in processing of the 5'-end of pre-16S rRNA. The sequence is that of Putative pre-16S rRNA nuclease from Geobacillus sp. (strain WCH70).